We begin with the raw amino-acid sequence, 252 residues long: Hydroxyacylglutathione hydrolase (252 aa).

7 residues coordinate Zn(2+): His-54, His-56, Asp-58, His-59, His-113, Asp-132, and His-170.

The protein belongs to the metallo-beta-lactamase superfamily. Glyoxalase II family. In terms of assembly, monomer. Requires Zn(2+) as cofactor.

The catalysed reaction is an S-(2-hydroxyacyl)glutathione + H2O = a 2-hydroxy carboxylate + glutathione + H(+). Its pathway is secondary metabolite metabolism; methylglyoxal degradation; (R)-lactate from methylglyoxal: step 2/2. Its function is as follows. Thiolesterase that catalyzes the hydrolysis of S-D-lactoyl-glutathione to form glutathione and D-lactic acid. This Synechococcus sp. (strain JA-2-3B'a(2-13)) (Cyanobacteria bacterium Yellowstone B-Prime) protein is Hydroxyacylglutathione hydrolase.